The chain runs to 96 residues: Co-chaperonin GroES (96 aa).

This sequence belongs to the GroES chaperonin family. Heptamer of 7 subunits arranged in a ring. Interacts with the chaperonin GroEL.

Its subcellular location is the cytoplasm. Its function is as follows. Together with the chaperonin GroEL, plays an essential role in assisting protein folding. The GroEL-GroES system forms a nano-cage that allows encapsulation of the non-native substrate proteins and provides a physical environment optimized to promote and accelerate protein folding. GroES binds to the apical surface of the GroEL ring, thereby capping the opening of the GroEL channel. The chain is Co-chaperonin GroES from Paraburkholderia phytofirmans (strain DSM 17436 / LMG 22146 / PsJN) (Burkholderia phytofirmans).